A 248-amino-acid polypeptide reads, in one-letter code: Proteasome subunit alpha (248 aa).

It belongs to the peptidase T1A family. In terms of assembly, the 20S proteasome core is composed of 14 alpha and 14 beta subunits that assemble into four stacked heptameric rings, resulting in a barrel-shaped structure. The two inner rings, each composed of seven catalytic beta subunits, are sandwiched by two outer rings, each composed of seven alpha subunits. The catalytic chamber with the active sites is on the inside of the barrel. Has a gated structure, the ends of the cylinder being occluded by the N-termini of the alpha-subunits. Is capped by the proteasome-associated ATPase, ARC.

The protein localises to the cytoplasm. It functions in the pathway protein degradation; proteasomal Pup-dependent pathway. Its activity is regulated as follows. The formation of the proteasomal ATPase ARC-20S proteasome complex, likely via the docking of the C-termini of ARC into the intersubunit pockets in the alpha-rings, may trigger opening of the gate for substrate entry. Interconversion between the open-gate and close-gate conformations leads to a dynamic regulation of the 20S proteasome proteolysis activity. Component of the proteasome core, a large protease complex with broad specificity involved in protein degradation. The polypeptide is Proteasome subunit alpha (Mycobacterium tuberculosis (strain ATCC 25177 / H37Ra)).